Here is a 214-residue protein sequence, read N- to C-terminus: Cytochrome c biogenesis ATP-binding export protein CcmA (214 aa).

Residues 12–214 (LAAHALAFSR…TRMLTLEAAA (203 aa)) form the ABC transporter domain. ATP is bound at residue 44 to 51 (GDNGAGKT).

The protein belongs to the ABC transporter superfamily. CcmA exporter (TC 3.A.1.107) family. In terms of assembly, the complex is composed of two ATP-binding proteins (CcmA) and two transmembrane proteins (CcmB).

The protein localises to the cell inner membrane. It catalyses the reaction heme b(in) + ATP + H2O = heme b(out) + ADP + phosphate + H(+). Part of the ABC transporter complex CcmAB involved in the biogenesis of c-type cytochromes; once thought to export heme, this seems not to be the case, but its exact role is uncertain. Responsible for energy coupling to the transport system. The chain is Cytochrome c biogenesis ATP-binding export protein CcmA from Xanthomonas oryzae pv. oryzae (strain MAFF 311018).